Here is a 35-residue protein sequence, read N- to C-terminus: Alpha-amanitin proprotein 2 (35 aa).

The propeptide occupies 1–10; the sequence is MFDTNSTRLP. At I11 the chain carries (3R,4R)-4,5-dihydroxyisoleucine; in form alpha-amanitin. I11 carries the (3R,4S)-4-hydroxyisoleucine; in form gamma-amanitin modification. A cross-link (cyclopeptide (Ile-Pro)) is located at residues 11–18; it reads IWGIGCNP. Residues 12 to 16 constitute a cross-link (2'-cysteinyl-6'-hydroxytryptophan sulfoxide (Trp-Cys)); the sequence is WGIGC. Residue P18 is modified to 4-hydroxyproline. The propeptide occupies 19–35; the sequence is WTAEHVDQTLVSGNDIC.

It belongs to the MSDIN fungal toxin family. In terms of processing, processed by the macrocyclase-peptidase enzyme POPB to yield a toxic bicyclic octapeptide. POPB first removes 10 residues from the N-terminus. Conformational trapping of the remaining peptide forces the enzyme to release this intermediate rather than proceed to macrocyclization. The enzyme rebinds the remaining peptide in a different conformation and catalyzes macrocyclization of the N-terminal 8 residues.

Its function is as follows. Major toxin belonging to the bicyclic octapeptides amatoxins that acts by binding non-competitively to RNA polymerase II and greatly slowing the elongation of transcripts from target promoters. In Galerina marginata (strain CBS 339.88), this protein is Alpha-amanitin proprotein 2.